Here is a 668-residue protein sequence, read N- to C-terminus: Bestrophin-3 (668 aa).

Residues 1-31 are Cytoplasmic-facing; the sequence is MTVTYSSKVANATFFGFHRLLLKWRGSIYKL. Alanine 10 contacts Ca(2+). A helical transmembrane segment spans residues 32–51; sequence LYREFIVFAVLYTAISLVYR. The Extracellular portion of the chain corresponds to 52–60; sequence LLLTGVQKR. A helical membrane pass occupies residues 61–82; that stretch reads YFEKLSIYCDRYAEQIPVTFVL. Residues 83-237 are Cytoplasmic-facing; sequence GFYVTLVVNR…DWVGIPLVYT (155 aa). The chain crosses the membrane as a helical span at residues 238–255; it reads QVVTLAVYTFFFACLIGR. The Extracellular segment spans residues 256–274; the sequence is QFLDPTKGYAGHDLDLYIP. A helical membrane pass occupies residues 275–288; sequence IFTLLQFFFYAGWL. The Cytoplasmic segment spans residues 289-668; that stretch reads KVAEQLINPF…LNKETEESPK (380 aa). Residues glutamine 293, asparagine 296, aspartate 301, and aspartate 304 each coordinate Ca(2+). 3 disordered regions span residues 400 to 454, 473 to 493, and 532 to 570; these read SAHE…KKSC, RETS…VRTS, and TGVQ…VSAS. Residues 425-436 show a composition bias toward basic and acidic residues; it reads PRDDLSPARDLL. A compositionally biased stretch (low complexity) spans 475-489; it reads TSQTSTLQSLTPQSS. Over residues 532-545 the composition is skewed to polar residues; it reads TGVQPSKTEQQQGP.

This sequence belongs to the anion channel-forming bestrophin (TC 1.A.46) family. Calcium-sensitive chloride channel subfamily. Present in skeletal muscle and weakly in brain, spinal cord, bone marrow and retina.

It is found in the cell membrane. It catalyses the reaction chloride(in) = chloride(out). In terms of biological role, ligand-gated anion channel that allows the movement of chloride monoatomic anions across cell membranes when activated by calcium (Ca2+). This is Bestrophin-3 from Homo sapiens (Human).